Here is a 409-residue protein sequence, read N- to C-terminus: uncharacterized protein (409 aa).

H46 serves as a coordination point for Zn(2+). Residue E49 is the Proton acceptor of the active site. Positions 50 and 126 each coordinate Zn(2+).

The protein belongs to the peptidase M16 family. Zn(2+) serves as cofactor.

This is an uncharacterized protein from Bacillus subtilis (strain 168).